The primary structure comprises 260 residues: MVLIRVLANLLILQLSYAQKSSELVIGGVECDINEHRFLVALYELTSMTFLCGGTLINQEWVVTAAHCDRLQLYLYIGMHDKYVKFDDEQGREPIEKYFYNCSNNLTTRDKDIMLIRLDRPVDNSTHIAPLSLPSRPPSVGSVCRVMGWGAISPSRDVLPDVPHCVNINLVNNAECRRAYPRLPATSRTLCAGVMQGGIDSCNRDSGGPLICDGQFQGVVNWGGNPCAQPNMPALYTKVYDYNDWIRSITAGNTTAACPP.

The N-terminal stretch at 1–18 (MVLIRVLANLLILQLSYA) is a signal peptide. Positions 19 to 24 (QKSSEL) are excised as a propeptide. Residues 25–251 (VIGGVECDIN…YNDWIRSITA (227 aa)) form the Peptidase S1 domain. Intrachain disulfides connect cysteine 31-cysteine 165, cysteine 52-cysteine 68, cysteine 102-cysteine 258, cysteine 144-cysteine 212, cysteine 176-cysteine 191, and cysteine 202-cysteine 227. Histidine 67 functions as the Charge relay system in the catalytic mechanism. Residues asparagine 101 and asparagine 105 are each glycosylated (N-linked (GlcNAc...) asparagine). Residue aspartate 112 is the Charge relay system of the active site. N-linked (GlcNAc...) asparagine glycosylation is present at asparagine 124. Serine 206 functions as the Charge relay system in the catalytic mechanism. Asparagine 253 is a glycosylation site (N-linked (GlcNAc...) asparagine).

This sequence belongs to the peptidase S1 family. Snake venom subfamily. Monomer. Post-translationally, N-glycosylated. As to expression, expressed by the venom gland.

It is found in the secreted. Thrombin-like snake venom serine protease that coagulates human fibrinogen by hydrolysis of the alpha chains (FGA). The protein is Thrombin-like enzyme acutobin of Deinagkistrodon acutus (Hundred-pace snake).